Here is a 402-residue protein sequence, read N- to C-terminus: Cholinephosphotransferase 1 (402 aa).

Over 1–62 (MGLAEGLAAR…LVEKVPLWLA (62 aa)) the chain is Cytoplasmic. A helical transmembrane segment spans residues 63–83 (PNTITMVGLLLNVLSTLILVC). Residue asparagine 64 participates in CDP-choline binding. The Lumenal segment spans residues 84-93 (YCPTATEGAP). Residues 94 to 118 (FWTYLLCAIGLFVYQSLDAIDGKQA) traverse the membrane as a helical segment. Residues aspartate 111 and aspartate 114 each coordinate Mg(2+). A CDP-choline-binding site is contributed by arginine 119. Residues 119–125 (RRTNSSS) lie on the Cytoplasmic side of the membrane. A helical membrane pass occupies residues 126-150 (PLGEMFDHGCDSISIVFVNLGTIAA). Aspartate 132 provides a ligand contact to Mg(2+). Histidine 133 functions as the Proton acceptor in the catalytic mechanism. Aspartate 136 is a binding site for Mg(2+). Residues 151–160 (VRLGTLPGWM) are Lumenal-facing. Residues 161–179 (FYCCFVGMFMFYCAQWQTY) traverse the membrane as a helical segment. Residues 180–190 (VCGTLKFGIID) are Cytoplasmic-facing. The chain crosses the membrane as a helical span at residues 191 to 207 (VTELQISVTVMFLMTAV). At 208–222 (CGPELWDYEIPFTGL) the chain is on the lumenal side. The chain crosses the membrane as a helical span at residues 223–248 (PMKTIPLLGIIGGTVYSCSNYFRVIL). Over 249 to 265 (SGGVGKNGSTVAGTSVL) the chain is Cytoplasmic. The chain crosses the membrane as a helical span at residues 266 to 281 (SPGLHIGLVLLLALMI). Over 282–293 (YKKSTTNLFLQN) the chain is Lumenal. The chain crosses the membrane as a helical span at residues 294-316 (PCLYTLAFGFVSAKITIKLVIAH). Residues 317 to 329 (MTKSEISLQDTAF) lie on the Cytoplasmic side of the membrane. Residues 330–339 (IGPGLLFFNQ) form a helical membrane-spanning segment. Topologically, residues 340-346 (YFNSFID) are lumenal. The helical transmembrane segment at 347 to 376 (EYIVLWIAMVISFADLLRYCISVCLQIATH) threads the bilayer. The Cytoplasmic portion of the chain corresponds to 377–402 (LRISVFRISSNQAAEQVQTQKQKLTD).

This sequence belongs to the CDP-alcohol phosphatidyltransferase class-I family. As to quaternary structure, homodimer. It depends on Mg(2+) as a cofactor. The cofactor is Mn(2+).

It is found in the golgi apparatus membrane. It catalyses the reaction CDP-choline + a 1,2-diacyl-sn-glycerol = a 1,2-diacyl-sn-glycero-3-phosphocholine + CMP + H(+). It carries out the reaction 1,2-dioctanoyl-sn-glycerol + CDP-choline = 1,2-dioctanoyl-sn-glycero-3-phosphocholine + CMP + H(+). The enzyme catalyses 1-octadecanoyl-2-(5Z,8Z,11Z,14Z-eicosatetraenoyl)-sn-glycerol + CDP-choline = 1-octadecanoyl-2-(5Z,8Z,11Z,14Z-eicosatetraenoyl)-sn-glycero-3-phosphocholine + CMP + H(+). The catalysed reaction is 1-hexadecanoyl-2-(9Z-octadecenoyl)-sn-glycerol + CDP-choline = 1-hexadecanoyl-2-(9Z-octadecenoyl)-sn-glycero-3-phosphocholine + CMP + H(+). It catalyses the reaction 1-hexadecanoyl-2-(4Z,7Z,10Z,13Z,16Z,19Z-docosahexaenoyl)-sn-glycerol + CDP-choline = 1-hexadecanoyl-2-(4Z,7Z,10Z,13Z,16Z,19Z-docosahexaenoyl)-sn-glycero-3-phosphocholine + CMP + H(+). It participates in phospholipid metabolism; phosphatidylcholine biosynthesis; phosphatidylcholine from phosphocholine: step 2/2. Functionally, catalyzes the final step of de novo phosphatidylcholine (PC) synthesis, i.e. the transfer of choline phosphate from CDP-choline to the free hydroxyl of a diacylglycerol (DAG), producing a PC. It thereby plays a central role in the formation and maintenance of vesicular membranes. Shows a high preference for CDP-choline over CDP-ethanolamine as substrate. The sequence is that of Cholinephosphotransferase 1 (chpt1) from Xenopus laevis (African clawed frog).